Reading from the N-terminus, the 435-residue chain is Proline--tRNA ligase (435 aa).

It belongs to the class-II aminoacyl-tRNA synthetase family. ProS type 2 subfamily. As to quaternary structure, homodimer.

It is found in the cytoplasm. The catalysed reaction is tRNA(Pro) + L-proline + ATP = L-prolyl-tRNA(Pro) + AMP + diphosphate. Catalyzes the attachment of proline to tRNA(Pro) in a two-step reaction: proline is first activated by ATP to form Pro-AMP and then transferred to the acceptor end of tRNA(Pro). In Rhodospirillum rubrum (strain ATCC 11170 / ATH 1.1.1 / DSM 467 / LMG 4362 / NCIMB 8255 / S1), this protein is Proline--tRNA ligase.